A 144-amino-acid chain; its full sequence is Phospholipase A2, membrane associated (144 aa).

The signal sequence occupies residues 1 to 20 (MKTLLLLAVIMIFGLLQAHG). 7 disulfide bridges follow: cysteine 46–cysteine 137, cysteine 48–cysteine 64, cysteine 63–cysteine 117, cysteine 69–cysteine 144, cysteine 70–cysteine 110, cysteine 79–cysteine 103, and cysteine 97–cysteine 108. Ca(2+) is bound by residues histidine 47, glycine 49, and glycine 51. Residue histidine 67 is part of the active site. Aspartate 68 contributes to the Ca(2+) binding site. Aspartate 111 is an active-site residue.

This sequence belongs to the phospholipase A2 family. The cofactor is Ca(2+). As to expression, expressed in various tissues including heart, kidney, liver, lung, pancreas, placenta, skeletal muscle, prostate, ovary, colon and small intestine. Not detected in lymphoid organs and brain. Expressed in platelets (at protein level).

Its subcellular location is the secreted. The protein localises to the cell membrane. It localises to the mitochondrion outer membrane. It catalyses the reaction a 1,2-diacyl-sn-glycero-3-phosphoethanolamine + H2O = a 1-acyl-sn-glycero-3-phosphoethanolamine + a fatty acid + H(+). It carries out the reaction 1-hexadecanoyl-2-(9Z-octadecenoyl)-sn-glycero-3-phosphoethanolamine + H2O = 1-hexadecanoyl-sn-glycero-3-phosphoethanolamine + (9Z)-octadecenoate + H(+). The enzyme catalyses 1-hexadecanoyl-2-(9Z,12Z-octadecadienoyl)-sn-glycero-3-phosphoethanolamine + H2O = 1-hexadecanoyl-sn-glycero-3-phosphoethanolamine + (9Z,12Z)-octadecadienoate + H(+). The catalysed reaction is 1-hexadecanoyl-2-(5Z,8Z,11Z,14Z-eicosatetraenoyl)-sn-glycero-3-phosphoethanolamine + H2O = 1-hexadecanoyl-sn-glycero-3-phosphoethanolamine + (5Z,8Z,11Z,14Z)-eicosatetraenoate + H(+). It catalyses the reaction N-hexadecanoyl-1,2-di-(9Z-octadecenoyl)-sn-glycero-3-phosphoethanolamine + H2O = N-hexadecanoyl-1-(9Z-octadecenoyl)-sn-glycero-3-phosphoethanolamine + (9Z)-octadecenoate + H(+). It carries out the reaction 1,2-dihexadecanoyl-sn-glycero-3-phospho-(1'-sn-glycerol) + H2O = 1-hexadecanoyl-sn-glycero-3-phospho-(1'-sn-glycerol) + hexadecanoate + H(+). The enzyme catalyses 1-hexadecanoyl-2-(9Z-octadecenoyl)-sn-glycero-3-phosphoglycerol + H2O = 1-hexadecanoyl-sn-glycero-3-phosphoglycerol + (9Z)-octadecenoate + H(+). The catalysed reaction is 1-hexadecanoyl-2-(9Z-octadecenoyl)-sn-glycero-3-phospho-(1'-sn-glycerol) + H2O = 1-hexadecanoyl-sn-glycero-3-phospho-(1'-sn-glycerol) + (9Z)-octadecenoate + H(+). It catalyses the reaction a 1,2-diacyl-sn-glycero-3-phosphocholine + H2O = a 1-acyl-sn-glycero-3-phosphocholine + a fatty acid + H(+). It carries out the reaction 1,2-dihexadecanoyl-sn-glycero-3-phosphocholine + H2O = 1-hexadecanoyl-sn-glycero-3-phosphocholine + hexadecanoate + H(+). The enzyme catalyses 1-hexadecanoyl-2-(9Z-octadecenoyl)-sn-glycero-3-phosphocholine + H2O = 1-hexadecanoyl-sn-glycero-3-phosphocholine + (9Z)-octadecenoate + H(+). The catalysed reaction is 1-hexadecanoyl-2-(9Z,12Z-octadecadienoyl)-sn-glycero-3-phosphocholine + H2O = (9Z,12Z)-octadecadienoate + 1-hexadecanoyl-sn-glycero-3-phosphocholine + H(+). It catalyses the reaction 1-hexadecanoyl-2-(4Z,7Z,10Z,13Z,16Z,19Z-docosahexaenoyl)-sn-glycero-3-phosphocholine + H2O = (4Z,7Z,10Z,13Z,16Z,19Z)-docosahexaenoate + 1-hexadecanoyl-sn-glycero-3-phosphocholine + H(+). Its function is as follows. Secretory calcium-dependent phospholipase A2 that primarily targets extracellular phospholipids with implications in host antimicrobial defense, inflammatory response and tissue regeneration. Hydrolyzes the ester bond of the fatty acyl group attached at sn-2 position of phospholipids (phospholipase A2 activity) with preference for phosphatidylethanolamines and phosphatidylglycerols over phosphatidylcholines. Contributes to lipid remodeling of cellular membranes and generation of lipid mediators involved in pathogen clearance. Displays bactericidal activity against Gram-positive bacteria by directly hydrolyzing phospholipids of the bacterial membrane. Upon sterile inflammation, targets membrane phospholipids of extracellular mitochondria released from activated platelets, generating free unsaturated fatty acids such as arachidonate that is used by neighboring leukocytes to synthesize inflammatory eicosanoids such as leukotrienes. Simultaneously, by compromising mitochondrial membrane integrity, promotes the release in circulation of potent damage-associated molecular pattern molecules that activate the innate immune response. Plays a stem cell regulator role in the intestinal crypt. Within intracellular compartment mediates Paneth cell differentiation and its stem cell supporting functions by inhibiting Wnt signaling pathway in intestinal stem cell (ICS). Secreted in the intestinal lumen upon inflammation, acts in an autocrine way and promotes prostaglandin E2 synthesis that stimulates Wnt signaling pathway in ICS cells and tissue regeneration. May play a role in the biosynthesis of N-acyl ethanolamines that regulate energy metabolism and inflammation. Hydrolyzes N-acyl phosphatidylethanolamines to N-acyl lysophosphatidylethanolamines, which are further cleaved by a lysophospholipase D to release N-acyl ethanolamines. Independent of its catalytic activity, acts as a ligand for integrins. Binds to and activates integrins ITGAV:ITGB3, ITGA4:ITGB1 and ITGA5:ITGB1. Binds to a site (site 2) which is distinct from the classical ligand-binding site (site 1) and induces integrin conformational changes and enhanced ligand binding to site 1. Induces cell proliferation in an integrin-dependent manner. This is Phospholipase A2, membrane associated (PLA2G2A) from Homo sapiens (Human).